Consider the following 299-residue polypeptide: Inosose dehydratase (299 aa).

The protein belongs to the IolE/MocC family. Glutathione serves as cofactor. Requires Co(2+) as cofactor. It depends on Mn(2+) as a cofactor.

It carries out the reaction scyllo-inosose = 3D-3,5/4-trihydroxycyclohexane-1,2-dione + H2O. Catalyzes the dehydration of inosose (2-keto-myo-inositol, 2KMI or 2,4,6/3,5-pentahydroxycyclohexanone) to 3D-(3,5/4)-trihydroxycyclohexane-1,2-dione (D-2,3-diketo-4-deoxy-epi-inositol). The sequence is that of Inosose dehydratase from Klebsiella pneumoniae subsp. pneumoniae (strain ATCC 700721 / MGH 78578).